A 276-amino-acid polypeptide reads, in one-letter code: Large ribosomal subunit protein uL2 (276 aa).

Disordered regions lie at residues 36–55 and 219–276; these read PLPR…RHRG and TVRG…GRKK. A compositionally biased stretch (basic residues) spans 255–276; the sequence is LGKKTRKKKNRSNKLIVRGRKK.

The protein belongs to the universal ribosomal protein uL2 family. As to quaternary structure, part of the 50S ribosomal subunit. Forms a bridge to the 30S subunit in the 70S ribosome.

Its function is as follows. One of the primary rRNA binding proteins. Required for association of the 30S and 50S subunits to form the 70S ribosome, for tRNA binding and peptide bond formation. It has been suggested to have peptidyltransferase activity; this is somewhat controversial. Makes several contacts with the 16S rRNA in the 70S ribosome. The chain is Large ribosomal subunit protein uL2 from Macrococcus caseolyticus (strain JCSC5402) (Macrococcoides caseolyticum).